Consider the following 583-residue polypeptide: Protein LONG AFTER FAR-RED 3 (583 aa).

The chain crosses the membrane as a helical span at residues 7–27; that stretch reads FPVMIGFVSAAVFLLISVAYL. Asparagine 55 and asparagine 374 each carry an N-linked (GlcNAc...) asparagine glycan.

It belongs to the metallo-dependent hydrolases superfamily. In terms of tissue distribution, expressed at low level in seedlings, roots, leaves, stems, flowers, and siliques.

The protein resides in the membrane. It is found in the cytoplasm. The protein localises to the perinuclear region. Required for phyA-controlled responses to continuous far-red light (FRc) conditions, including the inhibition of hypocotyl elongation and the regulation of XTH15/XTR7 expression. The sequence is that of Protein LONG AFTER FAR-RED 3 from Arabidopsis thaliana (Mouse-ear cress).